Consider the following 165-residue polypeptide: NAD(P)H-quinone oxidoreductase subunit J, chloroplastic (165 aa).

Belongs to the complex I 30 kDa subunit family. In terms of assembly, NDH is composed of at least 16 different subunits, 5 of which are encoded in the nucleus.

Its subcellular location is the plastid. It is found in the chloroplast thylakoid membrane. It carries out the reaction a plastoquinone + NADH + (n+1) H(+)(in) = a plastoquinol + NAD(+) + n H(+)(out). It catalyses the reaction a plastoquinone + NADPH + (n+1) H(+)(in) = a plastoquinol + NADP(+) + n H(+)(out). NDH shuttles electrons from NAD(P)H:plastoquinone, via FMN and iron-sulfur (Fe-S) centers, to quinones in the photosynthetic chain and possibly in a chloroplast respiratory chain. The immediate electron acceptor for the enzyme in this species is believed to be plastoquinone. Couples the redox reaction to proton translocation, and thus conserves the redox energy in a proton gradient. The protein is NAD(P)H-quinone oxidoreductase subunit J, chloroplastic of Ipomoea purpurea (Common morning glory).